The sequence spans 681 residues: Transketolase 2 (681 aa).

Substrate is bound at residue histidine 30. Thiamine diphosphate-binding positions include histidine 69 and 116-118; that span reads GPL. Position 157 (aspartate 157) interacts with Mg(2+). Residues glycine 158 and asparagine 187 each coordinate thiamine diphosphate. Positions 187 and 189 each coordinate Mg(2+). Residues histidine 263, arginine 359, and serine 386 each contribute to the substrate site. A thiamine diphosphate-binding site is contributed by histidine 263. Thiamine diphosphate is bound by residues glutamate 418 and phenylalanine 445. The active-site Proton donor is glutamate 418. Substrate contacts are provided by histidine 469, aspartate 477, and arginine 528.

Belongs to the transketolase family. As to quaternary structure, homodimer. The cofactor is Mg(2+). It depends on Ca(2+) as a cofactor. Requires Mn(2+) as cofactor. Co(2+) serves as cofactor. Thiamine diphosphate is required as a cofactor.

The catalysed reaction is D-sedoheptulose 7-phosphate + D-glyceraldehyde 3-phosphate = aldehydo-D-ribose 5-phosphate + D-xylulose 5-phosphate. In terms of biological role, catalyzes the transfer of a two-carbon ketol group from a ketose donor to an aldose acceptor, via a covalent intermediate with the cofactor thiamine pyrophosphate. This is Transketolase 2 (TKL2) from Saccharomyces cerevisiae (strain ATCC 204508 / S288c) (Baker's yeast).